Consider the following 71-residue polypeptide: MYKDYLFKSNKGYLSLTLVTLPVCSSLHCYFLWTTLSRLSSLPIDVPRSVCSVASLDLDLVIINLLSILRD.

The chain crosses the membrane as a helical span at residues 12–34 (GYLSLTLVTLPVCSSLHCYFLWT).

It is found in the membrane. This is an uncharacterized protein from Dictyostelium discoideum (Social amoeba).